We begin with the raw amino-acid sequence, 304 residues long: N-acetylmuramic acid 6-phosphate etherase (304 aa).

Positions 62-225 (IVQAFQNGGR…TTASMVMIGK (164 aa)) constitute an SIS domain. The active-site Proton donor is the glutamate 90. Glutamate 121 is an active-site residue.

It belongs to the GCKR-like family. MurNAc-6-P etherase subfamily. In terms of assembly, homodimer.

The catalysed reaction is N-acetyl-D-muramate 6-phosphate + H2O = N-acetyl-D-glucosamine 6-phosphate + (R)-lactate. Its pathway is amino-sugar metabolism; 1,6-anhydro-N-acetylmuramate degradation. It participates in amino-sugar metabolism; N-acetylmuramate degradation. The protein operates within cell wall biogenesis; peptidoglycan recycling. In terms of biological role, specifically catalyzes the cleavage of the D-lactyl ether substituent of MurNAc 6-phosphate, producing GlcNAc 6-phosphate and D-lactate. Together with AnmK, is also required for the utilization of anhydro-N-acetylmuramic acid (anhMurNAc) either imported from the medium or derived from its own cell wall murein, and thus plays a role in cell wall recycling. The protein is N-acetylmuramic acid 6-phosphate etherase of Actinobacillus pleuropneumoniae serotype 5b (strain L20).